A 429-amino-acid chain; its full sequence is 3-phosphoshikimate 1-carboxyvinyltransferase (429 aa).

3 residues coordinate 3-phosphoshikimate: Lys23, Ser24, and Arg28. Lys23 is a phosphoenolpyruvate binding site. The phosphoenolpyruvate site is built by Gly94 and Arg126. Residues Ser171, Ser172, Gln173, Ser199, Asp316, Asn339, and Lys343 each coordinate 3-phosphoshikimate. Residue Gln173 participates in phosphoenolpyruvate binding. Asp316 (proton acceptor) is an active-site residue. Positions 347, 389, and 414 each coordinate phosphoenolpyruvate.

This sequence belongs to the EPSP synthase family. In terms of assembly, monomer.

The protein resides in the cytoplasm. It carries out the reaction 3-phosphoshikimate + phosphoenolpyruvate = 5-O-(1-carboxyvinyl)-3-phosphoshikimate + phosphate. Its pathway is metabolic intermediate biosynthesis; chorismate biosynthesis; chorismate from D-erythrose 4-phosphate and phosphoenolpyruvate: step 6/7. In terms of biological role, catalyzes the transfer of the enolpyruvyl moiety of phosphoenolpyruvate (PEP) to the 5-hydroxyl of shikimate-3-phosphate (S3P) to produce enolpyruvyl shikimate-3-phosphate and inorganic phosphate. This is 3-phosphoshikimate 1-carboxyvinyltransferase from Idiomarina loihiensis (strain ATCC BAA-735 / DSM 15497 / L2-TR).